Here is a 454-residue protein sequence, read N- to C-terminus: Phosphoglucosamine mutase (454 aa).

Ser-101 serves as the catalytic Phosphoserine intermediate. Mg(2+) contacts are provided by Ser-101, Asp-243, Asp-245, and Asp-247. Ser-101 carries the post-translational modification Phosphoserine.

It belongs to the phosphohexose mutase family. The cofactor is Mg(2+). Activated by phosphorylation.

It carries out the reaction alpha-D-glucosamine 1-phosphate = D-glucosamine 6-phosphate. Catalyzes the conversion of glucosamine-6-phosphate to glucosamine-1-phosphate. The polypeptide is Phosphoglucosamine mutase (Citrifermentans bemidjiense (strain ATCC BAA-1014 / DSM 16622 / JCM 12645 / Bem) (Geobacter bemidjiensis)).